Reading from the N-terminus, the 969-residue chain is Aspartic protease 5 (969 aa).

A signal peptide spans 1 to 22 (MEAGAMGGSSFLSFSSGPSAET). Low complexity predominate over residues 1-45 (MEAGAMGGSSFLSFSSGPSAETSPSSLSPPTSSSPSPSPQLVSDS). Disordered regions lie at residues 1 to 65 (MEAG…SSRT), 79 to 104 (ENEAAPTISQEERRGGSMTAASAGHL), 128 to 149 (SSATSVLSLGGERGRPPSRSSS), 173 to 193 (SSSSPLSPLPHPRGAPASACG), and 311 to 382 (FLSL…DLPR). Residues 23 to 820 (SPSSLSPPTS…PEGLPLSPQQ (798 aa)) lie on the Lumenal side of the membrane. Residues 311-324 (FLSLSSSPRSLASD) show a composition bias toward low complexity. The span at 335 to 355 (QSREQRGEREGERQRPDKGEE) shows a compositional bias: basic and acidic residues. The region spanning 413–758 (YFLDILVGTP…DREQDRVGFA (346 aa)) is the Peptidase A1 domain. The active site involves Asp431. A disordered region spans residues 608 to 635 (PPESESTPATEALRPVAGESASRRISEK). Asp682 is a catalytic residue. Positions 768-794 (DQRPRGPDSGDGPKGRPTAPFTVPPLR) are disordered. Positions 769 to 781 (QRPRGPDSGDGPK) are enriched in basic and acidic residues. Residues 821–841 (LWVAAALVVVAILIAVTVILL) form a helical membrane-spanning segment. The Cytoplasmic segment spans residues 842–969 (HTIKRPSRSS…TLLDLPLGGE (128 aa)). The tract at residues 922 to 969 (EDDGDFFGDDSVPSAEEQETAPSLSLREESSPFSASQSTLLDLPLGGE) is disordered. The span at 952 to 961 (SPFSASQSTL) shows a compositional bias: polar residues.

The protein belongs to the peptidase A1 family. Post-translationally, may be auto-cleaved to produce a 55 kDa form.

The protein localises to the golgi apparatus membrane. Functionally, in tachyzoites, plays an essential role in the export of several dense granule proteins into the host cell by cleaving the localization motif RRLxx (termed Toxoplasma export element (TEXEL)) located downstream of the N-terminal secretory signal sequence. However, can also regulate the export of proteins that lack the TEXEL motif, such as GRA24. Requires Arg at P3 and P2, and Leu at P1 in the substrate TEXEL motif and, specifically, cleaves after Leu. Cleaves GRA16; proteolytic cleavage is essential for the correct trafficking of GRA16 from the parasite into the infected host nucleus. Cleaves GRA19 and GRA20. Cleaves MYR1. Cleaves LCAT, GRA44, GRA46, GRA46, ROP35/WNG1 and ROP34/WNG2. By regulating the export of dense granule proteins into the host cell, regulates multiple processes during tachyzoite infection of host cells, including recruitment of host mitochondria to the parasitophorous vacuole (PV), formation of the nanotubular network (NTN) or intravacuolar network (IVN) which are membranous tubules that bud from the PV membrane into the vacuolar lumen and, up-regulation of host cell genes to facilitate the parasite infection and modulate the host innate immune response. At the bradyzoite stage, also involved in the formation of the cyst wall. The sequence is that of Aspartic protease 5 from Toxoplasma gondii.